The primary structure comprises 227 residues: Adenosylcobinamide-GDP ribazoletransferase (227 aa).

The next 5 membrane-spanning stretches (helical) occupy residues 3-23 (CLKA…ELDF), 26-46 (IWAT…AVYF), 95-115 (GVGG…ARPE), 117-137 (WLDY…VAAY), and 165-185 (AVAA…SLFF).

The protein belongs to the CobS family. It depends on Mg(2+) as a cofactor.

The protein resides in the cell membrane. The catalysed reaction is alpha-ribazole + adenosylcob(III)inamide-GDP = adenosylcob(III)alamin + GMP + H(+). It carries out the reaction alpha-ribazole 5'-phosphate + adenosylcob(III)inamide-GDP = adenosylcob(III)alamin 5'-phosphate + GMP + H(+). Its pathway is cofactor biosynthesis; adenosylcobalamin biosynthesis; adenosylcobalamin from cob(II)yrinate a,c-diamide: step 7/7. Its function is as follows. Joins adenosylcobinamide-GDP and alpha-ribazole to generate adenosylcobalamin (Ado-cobalamin). Also synthesizes adenosylcobalamin 5'-phosphate from adenosylcobinamide-GDP and alpha-ribazole 5'-phosphate. The polypeptide is Adenosylcobinamide-GDP ribazoletransferase (Pyrobaculum islandicum (strain DSM 4184 / JCM 9189 / GEO3)).